Consider the following 191-residue polypeptide: Signal peptidase IB (191 aa).

Residues 1–7 (MKKELLE) lie on the Cytoplasmic side of the membrane. Residues 8-28 (WIISIAVAFVILFIVGKFIVT) traverse the membrane as a helical segment. Residues 29 to 191 (PYTIKGESMD…HNFNPENTKN (163 aa)) are Extracellular-facing. Catalysis depends on residues S36 and K77.

Belongs to the peptidase S26 family.

The protein localises to the cell membrane. It catalyses the reaction Cleavage of hydrophobic, N-terminal signal or leader sequences from secreted and periplasmic proteins.. Essential for cell viability. The protein is Signal peptidase IB (spsB) of Staphylococcus aureus (strain Mu50 / ATCC 700699).